We begin with the raw amino-acid sequence, 161 residues long: MKVYKSFLIATASLFLFACSSFQNDDYAMNYKGQIGEPIMAIAMLSEQQHEWAGTPYVLGGVSRRGVDCSGFVQKTFFDRFNLRLPRSTVEQANYGKHVRKEDIQTGDLIFFKTGRGPNGYHVGIYVKEDKFLHASTRGGVVYSSMNNPYWSKAFWQVRRI.

The first 18 residues, 1–18 (MKVYKSFLIATASLFLFA), serve as a signal peptide directing secretion. Cysteine 19 is lipidated: N-palmitoyl cysteine. A lipid anchor (S-diacylglycerol cysteine) is attached at cysteine 19. One can recognise a NlpC/P60 domain in the interval 39 to 161 (IMAIAMLSEQ…SKAFWQVRRI (123 aa)). Cysteine 69 (nucleophile) is an active-site residue. Residue histidine 122 is the Proton acceptor of the active site. The active site involves histidine 134.

It belongs to the peptidase C40 family.

Its subcellular location is the cell membrane. The protein is Probable endopeptidase HI_1314 of Haemophilus influenzae (strain ATCC 51907 / DSM 11121 / KW20 / Rd).